The following is a 37-amino-acid chain: Large ribosomal subunit protein bL36 (37 aa).

This sequence belongs to the bacterial ribosomal protein bL36 family.

The polypeptide is Large ribosomal subunit protein bL36 (Pasteurella multocida (strain Pm70)).